Reading from the N-terminus, the 313-residue chain is Formimidoylglutamase (313 aa).

The Mn(2+) site is built by histidine 130, aspartate 155, histidine 157, aspartate 159, aspartate 241, and aspartate 243.

The protein belongs to the arginase family. The cofactor is Mn(2+).

The enzyme catalyses N-formimidoyl-L-glutamate + H2O = formamide + L-glutamate. The protein operates within amino-acid degradation; L-histidine degradation into L-glutamate; L-glutamate from N-formimidoyl-L-glutamate (hydrolase route): step 1/1. Catalyzes the conversion of N-formimidoyl-L-glutamate to L-glutamate and formamide. In Salmonella paratyphi B (strain ATCC BAA-1250 / SPB7), this protein is Formimidoylglutamase.